We begin with the raw amino-acid sequence, 180 residues long: Mitochondrial inner membrane protease subunit 2 (180 aa).

The chain crosses the membrane as a helical span at residues 19-39 (LVGITLWVPVLMFVEQHVVSV). Catalysis depends on residues Ser46 and Lys92.

Belongs to the peptidase S26 family. IMP2 subfamily. As to quaternary structure, heterodimer of 2 subunits, imp1 and imp2.

Its subcellular location is the mitochondrion inner membrane. Its function is as follows. Catalyzes the removal of transit peptides required for the targeting of proteins from the mitochondrial matrix, across the inner membrane, into the inter-membrane space. The protein is Mitochondrial inner membrane protease subunit 2 of Schizosaccharomyces pombe (strain 972 / ATCC 24843) (Fission yeast).